Consider the following 491-residue polypeptide: Probable cytosol aminopeptidase (491 aa).

Residues lysine 261 and aspartate 266 each coordinate Mn(2+). Residue lysine 273 is part of the active site. Positions 284, 343, and 345 each coordinate Mn(2+). Arginine 347 is a catalytic residue.

It belongs to the peptidase M17 family. It depends on Mn(2+) as a cofactor.

It is found in the cytoplasm. The enzyme catalyses Release of an N-terminal amino acid, Xaa-|-Yaa-, in which Xaa is preferably Leu, but may be other amino acids including Pro although not Arg or Lys, and Yaa may be Pro. Amino acid amides and methyl esters are also readily hydrolyzed, but rates on arylamides are exceedingly low.. The catalysed reaction is Release of an N-terminal amino acid, preferentially leucine, but not glutamic or aspartic acids.. In terms of biological role, presumably involved in the processing and regular turnover of intracellular proteins. Catalyzes the removal of unsubstituted N-terminal amino acids from various peptides. The chain is Probable cytosol aminopeptidase from Stenotrophomonas maltophilia (strain K279a).